A 63-amino-acid chain; its full sequence is Large ribosomal subunit protein uL30 (63 aa).

The protein belongs to the universal ribosomal protein uL30 family. Part of the 50S ribosomal subunit.

The sequence is that of Large ribosomal subunit protein uL30 from Methylobacterium sp. (strain 4-46).